The following is a 332-amino-acid chain: Holliday junction branch migration complex subunit RuvB (332 aa).

A large ATPase domain (RuvB-L) region spans residues 1-181; sequence MSRILDNEIM…FGITGHMEYY (181 aa). Residues Leu20, Arg21, Gly62, Lys65, Thr66, Thr67, 128 to 130, Arg171, Tyr181, and Arg218 each bind ATP; that span reads EDF. Thr66 is a binding site for Mg(2+). The small ATPAse domain (RuvB-S) stretch occupies residues 182–252; that stretch reads AHAGLTEIVE…ITDKALTMLD (71 aa). The segment at 255-332 is head domain (RuvB-H); the sequence is HEGLDYVDQK…EHLGYEYSEK (78 aa). DNA is bound by residues Arg291, Arg310, Arg312, and Arg315.

Belongs to the RuvB family. As to quaternary structure, homohexamer. Forms an RuvA(8)-RuvB(12)-Holliday junction (HJ) complex. HJ DNA is sandwiched between 2 RuvA tetramers; dsDNA enters through RuvA and exits via RuvB. An RuvB hexamer assembles on each DNA strand where it exits the tetramer. Each RuvB hexamer is contacted by two RuvA subunits (via domain III) on 2 adjacent RuvB subunits; this complex drives branch migration. In the full resolvosome a probable DNA-RuvA(4)-RuvB(12)-RuvC(2) complex forms which resolves the HJ.

It is found in the cytoplasm. The catalysed reaction is ATP + H2O = ADP + phosphate + H(+). Functionally, the RuvA-RuvB-RuvC complex processes Holliday junction (HJ) DNA during genetic recombination and DNA repair, while the RuvA-RuvB complex plays an important role in the rescue of blocked DNA replication forks via replication fork reversal (RFR). RuvA specifically binds to HJ cruciform DNA, conferring on it an open structure. The RuvB hexamer acts as an ATP-dependent pump, pulling dsDNA into and through the RuvAB complex. RuvB forms 2 homohexamers on either side of HJ DNA bound by 1 or 2 RuvA tetramers; 4 subunits per hexamer contact DNA at a time. Coordinated motions by a converter formed by DNA-disengaged RuvB subunits stimulates ATP hydrolysis and nucleotide exchange. Immobilization of the converter enables RuvB to convert the ATP-contained energy into a lever motion, pulling 2 nucleotides of DNA out of the RuvA tetramer per ATP hydrolyzed, thus driving DNA branch migration. The RuvB motors rotate together with the DNA substrate, which together with the progressing nucleotide cycle form the mechanistic basis for DNA recombination by continuous HJ branch migration. Branch migration allows RuvC to scan DNA until it finds its consensus sequence, where it cleaves and resolves cruciform DNA. The sequence is that of Holliday junction branch migration complex subunit RuvB from Streptococcus pneumoniae (strain JJA).